A 221-amino-acid polypeptide reads, in one-letter code: uncharacterized protein (221 aa).

The segment at 40-162 (TIEVEPSPVQ…EPPEKVELSP (123 aa)) is disordered. Positions 47–60 (PVQQDNPPISSEQA) are enriched in polar residues. A compositionally biased stretch (low complexity) spans 82–92 (SSAQQEATAQT).

This is an uncharacterized protein from Homo sapiens (Human).